The sequence spans 353 residues: Fe(3+) ions import ATP-binding protein FbpC (353 aa).

Positions 9–239 constitute an ABC transporter domain; sequence VTFENVTKKF…PASAFIADFM (231 aa). Position 41–48 (41–48) interacts with ATP; the sequence is GPSGCGKT.

Belongs to the ABC transporter superfamily. Fe(3+) ion importer (TC 3.A.1.10) family. In terms of assembly, the complex is composed of two ATP-binding proteins (FbpC), two transmembrane proteins (FbpB) and a solute-binding protein (FbpA).

It is found in the cell inner membrane. It catalyses the reaction Fe(3+)(out) + ATP + H2O = Fe(3+)(in) + ADP + phosphate + H(+). Functionally, part of the ABC transporter complex FbpABC involved in Fe(3+) ions import. Responsible for energy coupling to the transport system. The chain is Fe(3+) ions import ATP-binding protein FbpC from Brucella suis biovar 1 (strain 1330).